Here is a 495-residue protein sequence, read N- to C-terminus: tRNA-guanine(15) transglycosylase (495 aa).

The active-site Nucleophile is D83. D118 provides a ligand contact to substrate. Zn(2+)-binding residues include C273 and C278.

Belongs to the archaeosine tRNA-ribosyltransferase family. Requires Zn(2+) as cofactor.

It catalyses the reaction guanosine(15) in tRNA + 7-cyano-7-deazaguanine = 7-cyano-7-carbaguanosine(15) in tRNA + guanine. The protein operates within tRNA modification; archaeosine-tRNA biosynthesis. Its function is as follows. Exchanges the guanine residue with 7-cyano-7-deazaguanine (preQ0) at position 15 in the dihydrouridine loop (D-loop) of archaeal tRNAs. In Pyrobaculum aerophilum (strain ATCC 51768 / DSM 7523 / JCM 9630 / CIP 104966 / NBRC 100827 / IM2), this protein is tRNA-guanine(15) transglycosylase.